Consider the following 325-residue polypeptide: Foldase protein PrsA (325 aa).

Residues 1–20 (MKLMNKIIVPVTASALLLGA) form the signal peptide. Cys-21 carries the N-palmitoyl cysteine lipid modification. Cys-21 carries the S-diacylglycerol cysteine lipid modification. The PpiC domain maps to 139–245 (ENSKKASHIL…YGYHIIKADK (107 aa)). Disordered stretches follow at residues 159-202 (EGLS…KKDG) and 303-325 (PDKI…NSGS).

The protein belongs to the PrsA family.

It is found in the cell membrane. It catalyses the reaction [protein]-peptidylproline (omega=180) = [protein]-peptidylproline (omega=0). Its function is as follows. Plays a major role in protein secretion by helping the post-translocational extracellular folding of several secreted proteins. The protein is Foldase protein PrsA of Staphylococcus epidermidis (strain ATCC 12228 / FDA PCI 1200).